The sequence spans 66 residues: Beta-mammal toxin Co2 (66 aa).

The region spanning 1-66 (KEGYIVNYHD…VWPLPKKRCN (66 aa)) is the LCN-type CS-alpha/beta domain. Intrachain disulfides connect Cys12–Cys65, Cys16–Cys41, Cys25–Cys46, and Cys29–Cys48.

As to expression, expressed by the venom gland.

The protein resides in the secreted. Functionally, beta toxins bind voltage-independently at site-4 of sodium channels (Nav) and shift the voltage of activation toward more negative potentials thereby affecting sodium channel activation and promoting spontaneous and repetitive firing. This toxin acts on human Nav1.1/SCN1A, Nav1.2/SCN2A, Nav1.4/SCN4A and Nav1.6/SCN8A voltage-gated sodium channels. Also, it reduces the peak of sodium currents in Nav1.5/SCN5A at all potentials. In vivo, is lethal to mice when intraperitoneally injected at a dose of 5ug. No activity is observed when injected into crickets or woodlice. This Centruroides ornatus (Scorpion) protein is Beta-mammal toxin Co2.